The chain runs to 250 residues: Global transcriptional regulator CodY (250 aa).

Residues 1-146 are GAF domain; sequence MTLLEKTRKL…GATVVGLEIL (146 aa). Residues 194–213 constitute a DNA-binding region (H-T-H motif); it reads ASKIADKVGITRSVIVNALR.

This sequence belongs to the CodY family.

It localises to the cytoplasm. Functionally, DNA-binding global transcriptional regulator which is involved in the adaptive response to starvation and acts by directly or indirectly controlling the expression of numerous genes in response to nutrient availability. During rapid exponential growth, CodY is highly active and represses genes whose products allow adaptation to nutrient depletion. The protein is Global transcriptional regulator CodY of Caldanaerobacter subterraneus subsp. tengcongensis (strain DSM 15242 / JCM 11007 / NBRC 100824 / MB4) (Thermoanaerobacter tengcongensis).